Reading from the N-terminus, the 38-residue chain is MTTPNPNKQSVELNRTSLFWGLLLIFVLAVLFSNYFFN.

A helical membrane pass occupies residues 17-37 (SLFWGLLLIFVLAVLFSNYFF).

Belongs to the PsbL family. As to quaternary structure, PSII is composed of 1 copy each of membrane proteins PsbA, PsbB, PsbC, PsbD, PsbE, PsbF, PsbH, PsbI, PsbJ, PsbK, PsbL, PsbM, PsbT, PsbX, PsbY, PsbZ, Psb30/Ycf12, at least 3 peripheral proteins of the oxygen-evolving complex and a large number of cofactors. It forms dimeric complexes.

It localises to the plastid. The protein localises to the chloroplast thylakoid membrane. Functionally, one of the components of the core complex of photosystem II (PSII). PSII is a light-driven water:plastoquinone oxidoreductase that uses light energy to abstract electrons from H(2)O, generating O(2) and a proton gradient subsequently used for ATP formation. It consists of a core antenna complex that captures photons, and an electron transfer chain that converts photonic excitation into a charge separation. This subunit is found at the monomer-monomer interface and is required for correct PSII assembly and/or dimerization. The polypeptide is Photosystem II reaction center protein L (Chaetosphaeridium globosum (Charophycean green alga)).